A 304-amino-acid polypeptide reads, in one-letter code: Developmental pluripotency-associated protein 4 (304 aa).

A compositionally biased stretch (polar residues) spans 1–11 (MLRGSASSTSM). 2 disordered regions span residues 1–84 (MLRG…IPPL) and 147–176 (KKLK…VGEP). Basic and acidic residues predominate over residues 12 to 29 (EKAKGKEWTSTEKSREED). A Phosphothreonine modification is found at T215. A phosphoserine mark is found at S221 and S226.

In terms of assembly, interacts with DPPA2. Interacts with PCGF1.

The protein resides in the nucleus. In terms of biological role, may be involved in the maintenance of active epigenetic status of target genes. May inhibit differentiation of embryonic cells into a primitive ectoderm lineage. This is Developmental pluripotency-associated protein 4 (DPPA4) from Homo sapiens (Human).